We begin with the raw amino-acid sequence, 342 residues long: 6-hydroxytryprostatin B O-methyltransferase (342 aa).

Residue Asp-201 coordinates S-adenosyl-L-methionine. The active-site Proton acceptor is His-244.

It belongs to the class I-like SAM-binding methyltransferase superfamily. Cation-independent O-methyltransferase family. As to quaternary structure, homodimer.

It carries out the reaction 6-hydroxytryprostatin B + S-adenosyl-L-methionine = tryprostatin A + S-adenosyl-L-homocysteine + H(+). It participates in mycotoxin biosynthesis. 6-hydroxytryprostatin B O-methyltransferase; part of the gene cluster that mediates the biosynthesis of fumitremorgins, indole alkaloids that carry not only intriguing chemical structures, but also interesting biological and pharmacological activities. The biosynthesis of fumitremorgin-type alkaloids begins by condensation of the two amino acids L-tryptophan and L-proline to brevianamide F, catalyzed by the non-ribosomal peptide synthetase ftmA. Brevianamide F is then prenylated by the prenyltransferase ftmPT1/ftmB in the presence of dimethylallyl diphosphate, resulting in the formation of tryprostatin B. The three cytochrome P450 monooxygenases, ftmP450-1/ftmC, ftmP450-2/ftmE and ftmP450-3/FtmG, are responsible for the conversion of tryprostatin B to 6-hydroxytryprostatin B, tryprostatin A to fumitremorgin C and fumitremorgin C to 12,13-dihydroxyfumitremorgin C, respectively. The putative methyltransferase ftmMT/ftmD is expected for the conversion of 6-hydroxytryprostatin B to tryprostatin A. FtmPT2/FtmH catalyzes the prenylation of 12,13-dihydroxyfumitre-morgin C in the presence of dimethylallyl diphosphate, resulting in the formation of fumitremorgin B. Fumitremorgin B is further converted to verruculogen by ftmOx1/ftmF via the insertion of an endoperoxide bond between the two prenyl moieties. In some fungal species, verruculogen is further converted to fumitremorgin A, but the enzymes involved in this step have not been identified yet. This Aspergillus fumigatus (strain ATCC MYA-4609 / CBS 101355 / FGSC A1100 / Af293) (Neosartorya fumigata) protein is 6-hydroxytryprostatin B O-methyltransferase.